The chain runs to 318 residues: NADH-ubiquinone oxidoreductase chain 1 (318 aa).

8 helical membrane passes run 2–22, 69–89, 100–120, 146–166, 171–191, 231–251, 253–273, and 285–305; these read FMIN…FLTL, LLFT…WLPL, LGVL…LWSG, LAII…TNLI, HMWL…STLA, IMMM…TPLV, GIYT…FLWI, and LMHL…MWHV.

It belongs to the complex I subunit 1 family. Core subunit of respiratory chain NADH dehydrogenase (Complex I) which is composed of 45 different subunits.

The protein localises to the mitochondrion inner membrane. The enzyme catalyses a ubiquinone + NADH + 5 H(+)(in) = a ubiquinol + NAD(+) + 4 H(+)(out). In terms of biological role, core subunit of the mitochondrial membrane respiratory chain NADH dehydrogenase (Complex I) which catalyzes electron transfer from NADH through the respiratory chain, using ubiquinone as an electron acceptor. Essential for the catalytic activity and assembly of complex I. The polypeptide is NADH-ubiquinone oxidoreductase chain 1 (MT-ND1) (Myrmecophaga tridactyla (Giant anteater)).